Consider the following 731-residue polypeptide: 1,4-alpha-glucan branching enzyme GlgB (731 aa).

Catalysis depends on aspartate 411, which acts as the Nucleophile. Glutamate 464 acts as the Proton donor in catalysis.

It belongs to the glycosyl hydrolase 13 family. GlgB subfamily. As to quaternary structure, monomer.

It catalyses the reaction Transfers a segment of a (1-&gt;4)-alpha-D-glucan chain to a primary hydroxy group in a similar glucan chain.. The protein operates within glycan biosynthesis; glycogen biosynthesis. Its function is as follows. Catalyzes the formation of the alpha-1,6-glucosidic linkages in glycogen by scission of a 1,4-alpha-linked oligosaccharide from growing alpha-1,4-glucan chains and the subsequent attachment of the oligosaccharide to the alpha-1,6 position. This is 1,4-alpha-glucan branching enzyme GlgB from Mycobacterium tuberculosis (strain ATCC 25177 / H37Ra).